Here is a 130-residue protein sequence, read N- to C-terminus: Small ribosomal subunit protein uS11 (130 aa).

The protein belongs to the universal ribosomal protein uS11 family. In terms of assembly, part of the 30S ribosomal subunit. Interacts with proteins S7 and S18. Binds to IF-3.

In terms of biological role, located on the platform of the 30S subunit, it bridges several disparate RNA helices of the 16S rRNA. Forms part of the Shine-Dalgarno cleft in the 70S ribosome. This Campylobacter lari (strain RM2100 / D67 / ATCC BAA-1060) protein is Small ribosomal subunit protein uS11.